Reading from the N-terminus, the 123-residue chain is Anti-lipopolysaccharide factor (123 aa).

A signal peptide spans 1–26 (MRKGVVAGLCLALVVMCLYLPQPCEA). An N-linked (GlcNAc...) asparagine glycan is attached at N45. C55 and C76 are oxidised to a cystine.

In terms of tissue distribution, isoform 1 is highly expressed in muscle and stomach, moderately in heart and gill and at lower levels in hemocytes and hepatopancreas. Isoform 2 is mainly expressed in gill, hepatopancreas, muscle and eyestalk.

The protein localises to the secreted. Functionally, may bind to bacterial LPS and thus specifically inhibit the LPS-mediated activation of the hemolymph coagulation. It has a strong antibacterial effect especially on the growth of Gram-negative bacteria. In Portunus trituberculatus (Swimming crab), this protein is Anti-lipopolysaccharide factor.